A 67-amino-acid polypeptide reads, in one-letter code: Conotoxin LeDr192 (67 aa).

Positions 1–19 (MRCFPVFIILLLLIASAPC) are cleaved as a signal peptide. Positions 20 to 49 (FDARTKTDDDVPLSPLRDNLKRTIRTRLNI) are excised as a propeptide. At Thr-65 the chain carries Threonine amide.

The protein belongs to the conotoxin T superfamily. In terms of processing, contains 2 disulfide bonds that can be either 'C1-C3, C2-C4' or 'C1-C4, C2-C3', since these disulfide connectivities have been observed for conotoxins with cysteine framework V (for examples, see AC P0DQQ7 and AC P81755). As to expression, expressed by the venom duct.

It localises to the secreted. This is Conotoxin LeDr192 from Conus litteratus (Lettered cone).